Reading from the N-terminus, the 203-residue chain is Small ribosomal subunit protein uS3 (203 aa).

Residues 39-113 (IREIIRRNFL…NHVLNAKNIA (75 aa)) form the KH type-2 domain.

It belongs to the universal ribosomal protein uS3 family. In terms of assembly, part of the 30S ribosomal subunit. Forms a tight complex with proteins S10 and S14.

Its function is as follows. Binds the lower part of the 30S subunit head. Binds mRNA in the 70S ribosome, positioning it for translation. This Carsonella ruddii protein is Small ribosomal subunit protein uS3.